We begin with the raw amino-acid sequence, 122 residues long: Large ribosomal subunit protein uL14 (122 aa).

It belongs to the universal ribosomal protein uL14 family. As to quaternary structure, part of the 50S ribosomal subunit. Forms a cluster with proteins L3 and L19. In the 70S ribosome, L14 and L19 interact and together make contacts with the 16S rRNA in bridges B5 and B8.

In terms of biological role, binds to 23S rRNA. Forms part of two intersubunit bridges in the 70S ribosome. The sequence is that of Large ribosomal subunit protein uL14 from Cytophaga hutchinsonii (strain ATCC 33406 / DSM 1761 / CIP 103989 / NBRC 15051 / NCIMB 9469 / D465).